The sequence spans 29 residues: Cycloviolacin-H2 (29 aa).

Positions 1–29 (SAIACGESCVYIPCFIPGCSCRNRVCYLN) form a cross-link, cyclopeptide (Ser-Asn). Cystine bridges form between Cys5/Cys19, Cys9/Cys21, and Cys14/Cys26.

In terms of processing, this is a cyclic peptide.

Functionally, probably participates in a plant defense mechanism. This is Cycloviolacin-H2 from Viola hederacea (Australian violet).